We begin with the raw amino-acid sequence, 346 residues long: Nicotinate-nucleotide--dimethylbenzimidazole phosphoribosyltransferase (346 aa).

Glutamate 313 functions as the Proton acceptor in the catalytic mechanism.

This sequence belongs to the CobT family.

The catalysed reaction is 5,6-dimethylbenzimidazole + nicotinate beta-D-ribonucleotide = alpha-ribazole 5'-phosphate + nicotinate + H(+). Its pathway is nucleoside biosynthesis; alpha-ribazole biosynthesis; alpha-ribazole from 5,6-dimethylbenzimidazole: step 1/2. In terms of biological role, catalyzes the synthesis of alpha-ribazole-5'-phosphate from nicotinate mononucleotide (NAMN) and 5,6-dimethylbenzimidazole (DMB). The chain is Nicotinate-nucleotide--dimethylbenzimidazole phosphoribosyltransferase from Parabacteroides distasonis (strain ATCC 8503 / DSM 20701 / CIP 104284 / JCM 5825 / NCTC 11152).